The sequence spans 111 residues: Ribonuclease P protein component (111 aa).

The protein belongs to the RnpA family. In terms of assembly, consists of a catalytic RNA component (M1 or rnpB) and a protein subunit.

It carries out the reaction Endonucleolytic cleavage of RNA, removing 5'-extranucleotides from tRNA precursor.. Its function is as follows. RNaseP catalyzes the removal of the 5'-leader sequence from pre-tRNA to produce the mature 5'-terminus. It can also cleave other RNA substrates such as 4.5S RNA. The protein component plays an auxiliary but essential role in vivo by binding to the 5'-leader sequence and broadening the substrate specificity of the ribozyme. This is Ribonuclease P protein component from Fusobacterium nucleatum subsp. nucleatum (strain ATCC 25586 / DSM 15643 / BCRC 10681 / CIP 101130 / JCM 8532 / KCTC 2640 / LMG 13131 / VPI 4355).